Reading from the N-terminus, the 601-residue chain is Elongation factor 4 (601 aa).

The tr-type G domain occupies Ile-5–Arg-187. GTP contacts are provided by residues Asp-17–Thr-22 and Asn-134–Asp-137.

This sequence belongs to the TRAFAC class translation factor GTPase superfamily. Classic translation factor GTPase family. LepA subfamily.

Its subcellular location is the cell inner membrane. The enzyme catalyses GTP + H2O = GDP + phosphate + H(+). In terms of biological role, required for accurate and efficient protein synthesis under certain stress conditions. May act as a fidelity factor of the translation reaction, by catalyzing a one-codon backward translocation of tRNAs on improperly translocated ribosomes. Back-translocation proceeds from a post-translocation (POST) complex to a pre-translocation (PRE) complex, thus giving elongation factor G a second chance to translocate the tRNAs correctly. Binds to ribosomes in a GTP-dependent manner. The polypeptide is Elongation factor 4 (Borrelia garinii subsp. bavariensis (strain ATCC BAA-2496 / DSM 23469 / PBi) (Borreliella bavariensis)).